Reading from the N-terminus, the 401-residue chain is MAKQKFERTKPHVNVGTIGHVDHGKTTLTAAITKVLALQGAAQFVSYDQIDNAPEERARGITIAIRHVEYQTAKRHYAHVDCPGHADYIKNMITGAAQMDGAILVVSAPDGPMPQTREHVLLARQVQVPAMVVFLNKVDMMDDEELLELVELELRELLSNHGFPGDEIPIIRGSALAALSSTSTDINAPEYQCILDLMNAVDEYIPTPVREVDKPFLMPIEDVFGIKGRGTVVTGRIERGKVKMGDTVEIVGMSHEAPKKTVVTGVEMFQKTLDEGIAGDNVGVLLRGIERTEVERGQVLAAPGSIKPHAKFKANVYVLKKEEGGRHTPFFPGYRPQFYIRTTDVTGAISLPAGVEMVMPGDNIEMLVELIVPVAIEEGLRFAIREGGRTVGAGVVSAIVD.

Positions 10–209 (KPHVNVGTIG…AVDEYIPTPV (200 aa)) constitute a tr-type G domain. Residues 19–26 (GHVDHGKT) form a G1 region. 19–26 (GHVDHGKT) provides a ligand contact to GTP. Residue Thr-26 participates in Mg(2+) binding. Residues 60-64 (GITIA) form a G2 region. The segment at 81 to 84 (DCPG) is G3. GTP is bound by residues 81 to 85 (DCPGH) and 136 to 139 (NKVD). Residues 136–139 (NKVD) are G4. A G5 region spans residues 174 to 176 (SAL).

The protein belongs to the TRAFAC class translation factor GTPase superfamily. Classic translation factor GTPase family. EF-Tu/EF-1A subfamily. Monomer.

It is found in the cytoplasm. It carries out the reaction GTP + H2O = GDP + phosphate + H(+). Its function is as follows. GTP hydrolase that promotes the GTP-dependent binding of aminoacyl-tRNA to the A-site of ribosomes during protein biosynthesis. The polypeptide is Elongation factor Tu 1 (Roseiflexus castenholzii (strain DSM 13941 / HLO8)).